We begin with the raw amino-acid sequence, 61 residues long: Potassium channel toxin alpha-KTx 6.6 (61 aa).

The signal sequence occupies residues 1–23 (MNAKFILLLLVVATTMLLPDTQG). 4 disulfides stabilise this stretch: cysteine 29–cysteine 50, cysteine 35–cysteine 55, cysteine 39–cysteine 57, and cysteine 45–cysteine 60. Cysteine 60 is subject to Cysteine amide.

Belongs to the short scorpion toxin superfamily. Potassium channel inhibitor family. Alpha-KTx 06 subfamily. In terms of tissue distribution, expressed by the venom gland.

Its subcellular location is the secreted. Its function is as follows. Blocker of voltage-gated potassium channels. In Opistophthalmus carinatus (African yellow leg scorpion), this protein is Potassium channel toxin alpha-KTx 6.6.